The chain runs to 407 residues: V-set and immunoglobulin domain-containing protein 1 (407 aa).

A signal peptide spans 1–22; sequence MMVFAFWKVFLILNCLAGQVSM. In terms of domain architecture, Ig-like V-type spans 23-134; sequence VQVTIPDTFV…HFVGKNQGLL (112 aa). The Extracellular portion of the chain corresponds to 23–234; the sequence is VQVTIPDTFV…EIDLTSSHPE (212 aa). The N-linked (GlcNAc...) asparagine glycan is linked to Asn-39. 2 cysteine pairs are disulfide-bonded: Cys-44–Cys-118 and Cys-163–Cys-213. The 85-residue stretch at 145 to 229 folds into the Ig-like C2-type domain; it reads PFCTIQGRPE…GNSSCEIDLT (85 aa). Asn-202 and Asn-221 each carry an N-linked (GlcNAc...) asparagine glycan. Residues 235-255 traverse the membrane as a helical segment; it reads VGIIIGALVGALIGAAVIICV. Topologically, residues 256 to 407 are cytoplasmic; it reads VYFARNKVKS…SKAGEDTVKA (152 aa). Disordered stretches follow at residues 268-289 and 318-407; these read QKNL…PQQS and TAVL…TVKA. Residues Ser-273 and Ser-274 each carry the phosphoserine modification. Residues 361–371 show a composition bias toward acidic residues; it reads DPETETEPEPE.

Its subcellular location is the membrane. This Mus musculus (Mouse) protein is V-set and immunoglobulin domain-containing protein 1 (Vsig1).